The chain runs to 290 residues: Arylamine N-acetyltransferase 2 (290 aa).

The active-site Acyl-thioester intermediate is the Cys68. The CoA site is built by Ser103 and Gly104. 106-107 (IH) serves as a coordination point for substrate. Active-site residues include His107 and Asp122. Tyr208 contacts CoA.

Belongs to the arylamine N-acetyltransferase family.

Its subcellular location is the cytoplasm. The catalysed reaction is an arylamine + acetyl-CoA = an N-acetylarylamine + CoA. The enzyme catalyses an N-hydroxyarylamine + acetyl-CoA = an N-acetoxyarylamine + CoA. Catalyzes the N- or O-acetylation of various arylamine and heterocyclic amine substrates, and participates in the detoxification of a plethora of hydrazine and arylamine drugs. The chain is Arylamine N-acetyltransferase 2 (NAT2) from Mesocricetus auratus (Golden hamster).